Consider the following 146-residue polypeptide: Large ribosomal subunit protein uL15 (146 aa).

The interval methionine 1 to leucine 57 is disordered.

This sequence belongs to the universal ribosomal protein uL15 family. Part of the 50S ribosomal subunit.

Functionally, binds to the 23S rRNA. The polypeptide is Large ribosomal subunit protein uL15 (Agathobacter rectalis (strain ATCC 33656 / DSM 3377 / JCM 17463 / KCTC 5835 / VPI 0990) (Eubacterium rectale)).